Here is a 621-residue protein sequence, read N- to C-terminus: Phosphoenolpyruvate carboxykinase [GTP] (621 aa).

Substrate-binding positions include Arg-83 and 217-219 (YGG). Residues Lys-226 and His-245 each coordinate Mn(2+). Ser-267 is a substrate binding site. 268-273 (MCGKTS) contacts GTP. Residue Cys-269 is part of the active site. Asp-286 is a binding site for Mn(2+). 381-383 (NAR) provides a ligand contact to substrate. Positions 383 and 415 each coordinate GTP.

This sequence belongs to the phosphoenolpyruvate carboxykinase [GTP] family. It depends on Mn(2+) as a cofactor.

Its subcellular location is the cytoplasm. It catalyses the reaction oxaloacetate + GTP = phosphoenolpyruvate + GDP + CO2. Its pathway is carbohydrate biosynthesis; gluconeogenesis. In terms of biological role, catalyzes the conversion of oxaloacetate (OAA) to phosphoenolpyruvate (PEP), the rate-limiting step in the metabolic pathway that produces glucose from lactate and other precursors derived from the citric acid cycle. This chain is Phosphoenolpyruvate carboxykinase [GTP], found in Pyrococcus horikoshii (strain ATCC 700860 / DSM 12428 / JCM 9974 / NBRC 100139 / OT-3).